The sequence spans 457 residues: Cystathionine beta-lyase (457 aa).

A disordered region spans residues 1–41 (MSTPNSDSPAAQAAKKVFSRLDLDGHNLPPSPAPSSPHNGR).

It belongs to the trans-sulfuration enzymes family. It depends on pyridoxal 5'-phosphate as a cofactor.

The protein resides in the cytoplasm. It localises to the nucleus. It carries out the reaction L,L-cystathionine + H2O = L-homocysteine + pyruvate + NH4(+). The catalysed reaction is an S-substituted L-cysteine + H2O = a thiol + pyruvate + NH4(+). The protein operates within amino-acid biosynthesis; L-methionine biosynthesis via de novo pathway; L-homocysteine from L-cystathionine: step 1/1. Involved in de novo synthesis of methionine. The protein is Cystathionine beta-lyase (met-2) of Neurospora crassa (strain ATCC 24698 / 74-OR23-1A / CBS 708.71 / DSM 1257 / FGSC 987).